We begin with the raw amino-acid sequence, 63 residues long: Beta-defensin 38 (63 aa).

A signal peptide spans M1 to A21. 3 cysteine pairs are disulfide-bonded: C29–C58, C36–C51, and C41–C59.

This sequence belongs to the beta-defensin family. In terms of tissue distribution, only expressed in epididymis (caput, corpus and cauda).

The protein localises to the secreted. Functionally, synthetic Defb38 kills both Gram-negative (E.coli and P.aeruginosa) and Gram-positive (E.faecium) bacteria. The chain is Beta-defensin 38 (Defb38) from Mus musculus (Mouse).